Consider the following 105-residue polypeptide: uncharacterized protein (105 aa).

Residues 41-62 (GIITKIAASPFVIVLYFNTAFF) traverse the membrane as a helical segment.

The protein localises to the membrane. This is an uncharacterized protein from Saccharomyces cerevisiae (strain ATCC 204508 / S288c) (Baker's yeast).